Here is a 392-residue protein sequence, read N- to C-terminus: MKRDLYETLGVARNADEKELKSAFRKLAMQYHPDRNPGDQEAEKSFKEINQAYETLKDPQKRAAYDRYGHAAFEQGGMGAGFGNGFAGGSAGGTSRHFRRHLRRDDGRRSSAPLLGRSRTRCGPSLQHGDHPRGGLFRQDGADPRADVGHLRRLHGLGREAGHQPEDLRHLPGLRPYPRRPGLLLDRTHLPDLRRSRSDDHRSLQQMPWPGPGHRGAHAVGQYSDRHRGRHAYPPLRRGRTGLRGGPPGDLYIFLSVRPHEFYQRDGADLYCSVPISMTTATLGGKFDVTTLDGTKSRVTVPEGTQAGKQFRLKGKGMHGRALQPDGRPLYPDPDRDAAEAHQAPARIAAGVRADLVQGEQSAIDGLLLPHERFLRYTERIATPGFRLCPSP.

One can recognise a J domain in the interval 2 to 71 (KRDLYETLGV…RAAYDRYGHA (70 aa)). 2 disordered regions span residues 103–142 (RRDD…QDGA) and 157–244 (LGRE…TGLR). Residues 157–170 (LGREAGHQPEDLRH) are compositionally biased toward basic and acidic residues. Positions 171–185 (LPGLRPYPRRPGLLL) are enriched in low complexity. Residues 186-203 (DRTHLPDLRRSRSDDHRS) show a composition bias toward basic and acidic residues. Basic residues predominate over residues 227–241 (HRGRHAYPPLRRGRT).

The polypeptide is Protein NolC (nolC) (Rhizobium fredii (Sinorhizobium fredii)).